The primary structure comprises 226 residues: UPF0758 protein LL1007 (226 aa).

The MPN domain maps to 103–225; it reads QVLSSREYGL…YFSFREEEIR (123 aa). Zn(2+)-binding residues include His-174, His-176, and Asp-187. The short motif at 174–187 is the JAMM motif element; the sequence is HNHPSGNLKPSQAD.

Belongs to the UPF0758 family.

The protein is UPF0758 protein LL1007 of Lactococcus lactis subsp. lactis (strain IL1403) (Streptococcus lactis).